We begin with the raw amino-acid sequence, 142 residues long: Large ribosomal subunit protein uL11 (142 aa).

The protein belongs to the universal ribosomal protein uL11 family. As to quaternary structure, part of the ribosomal stalk of the 50S ribosomal subunit. Interacts with L10 and the large rRNA to form the base of the stalk. L10 forms an elongated spine to which L12 dimers bind in a sequential fashion forming a multimeric L10(L12)X complex. One or more lysine residues are methylated.

In terms of biological role, forms part of the ribosomal stalk which helps the ribosome interact with GTP-bound translation factors. This Pelotomaculum thermopropionicum (strain DSM 13744 / JCM 10971 / SI) protein is Large ribosomal subunit protein uL11.